The chain runs to 430 residues: MSSVVVVGTQWGDEGKGKITDFLSENAEAIARYQGGNNAGHTIKFDGVTYKLHLIPSGIFYKEKISVIGNGMVVDPKALVEELKYLHDKGVDTSNLRISNRAHIILPYHIRIDEADEERKGANKIGTTKKGIGPAYMDKAARVGIRIIDLLDKETFKEKLEHNLGEKNRLLERFYELEGFKLEDILDEYYEYGQQFKDYVCDTSVVLNDALDDGKRVLFEGAQGVMLDIDQGTYPFVTSSNPIAGGVTIGSGVGPSKINHVVGVAKAYTTRVGDGPFPTELFDSIGDTIREVGHEYGTTTGRPRRVGWFDSVVVRHARRVSGLTDLSLTLLDVLTGIETLKICVAYKLDGKTITEFPASLKDLARCEPVYEELPGWTEDITEVQSLDDLPVNCRHYMERIAQLTGVQVSMFSVGPDRAQTHVVKSVWRLA.

GTP-binding positions include 12–18 and 40–42; these read GDEGKGK and GHT. Aspartate 13 acts as the Proton acceptor in catalysis. Aspartate 13 and glycine 40 together coordinate Mg(2+). IMP-binding positions include 13–16, 38–41, threonine 128, arginine 142, glutamine 223, threonine 238, and arginine 302; these read DEGK and NAGH. Catalysis depends on histidine 41, which acts as the Proton donor. Position 298–304 (298–304) interacts with substrate; that stretch reads TTTGRPR. Residues arginine 304, 330 to 332, and 412 to 414 each bind GTP; these read LLD and SVG.

The protein belongs to the adenylosuccinate synthetase family. Homodimer. Mg(2+) serves as cofactor.

The protein localises to the cytoplasm. The catalysed reaction is IMP + L-aspartate + GTP = N(6)-(1,2-dicarboxyethyl)-AMP + GDP + phosphate + 2 H(+). It functions in the pathway purine metabolism; AMP biosynthesis via de novo pathway; AMP from IMP: step 1/2. Functionally, plays an important role in the de novo pathway of purine nucleotide biosynthesis. Catalyzes the first committed step in the biosynthesis of AMP from IMP. This is Adenylosuccinate synthetase from Listeria innocua serovar 6a (strain ATCC BAA-680 / CLIP 11262).